The primary structure comprises 792 residues: Protein SEY1 homolog 2 (792 aa).

Over 1–638 the chain is Cytoplasmic; the sequence is MEQIITGDGA…NIKAQANREQ (638 aa). The GB1/RHD3-type G domain maps to 28 to 245; sequence GVDYHTVAII…LKDYLFAEKS (218 aa). A GTP-binding site is contributed by 38–45; the sequence is GPQSSGKS. Residues 639–659 form a helical membrane-spanning segment; sequence IPGWAWLATFLCSSNYIMKLL. Over 660-662 the chain is Lumenal; sequence ANP. A helical membrane pass occupies residues 663–683; the sequence is IFFALAVIIGGIYSILRMLGL. At 684-792 the chain is on the cytoplasmic side; it reads QDVAKKTLLD…LTRTQSLEFM (109 aa). Residues 691–718 adopt a coiled-coil conformation; that stretch reads LLDKFNSLLKNLTKDENEQEKEGEENEE. Residues 703–792 are disordered; the sequence is TKDENEQEKE…LTRTQSLEFM (90 aa). The segment covering 707-723 has biased composition (acidic residues); sequence NEQEKEGEENEEPEEDQ. 2 stretches are compositionally biased toward polar residues: residues 739–751 and 764–774; these read SVSQ…SIYK and IPQTSPLGNND.

This sequence belongs to the TRAFAC class dynamin-like GTPase superfamily. GB1/RHD3 GTPase family. RHD3 subfamily.

The protein localises to the endoplasmic reticulum membrane. Functionally, probable GTP-binding protein that may be involved in cell development. The sequence is that of Protein SEY1 homolog 2 from Trichomonas vaginalis (strain ATCC PRA-98 / G3).